Here is a 177-residue protein sequence, read N- to C-terminus: Large ribosomal subunit protein uL6 (177 aa).

This sequence belongs to the universal ribosomal protein uL6 family. In terms of assembly, part of the 50S ribosomal subunit.

Functionally, this protein binds to the 23S rRNA, and is important in its secondary structure. It is located near the subunit interface in the base of the L7/L12 stalk, and near the tRNA binding site of the peptidyltransferase center. The protein is Large ribosomal subunit protein uL6 of Acinetobacter baumannii (strain AB307-0294).